The chain runs to 371 residues: 4-hydroxyprotoasukamycin monooxygenase (371 aa).

It belongs to the bacterial luciferase oxidoreductase family. FMN serves as cofactor.

It carries out the reaction 4-hydroxyprotoasukamycin + NADH + O2 + H(+) = asukamycin + NAD(+) + H2O. The protein operates within antibiotic biosynthesis. Its function is as follows. Involved in the biosynthesis of the antibiotic asukamycin. Catalyzes the epoxidation of 4-hydroxyprotoasukamycin to the final product, asukamycin. Can also convert some 4-hydroxyprotoasukamycin derivatives to their asukamycin derivatives, but cannot use protoasukamycin as substrate. Can also use NADPH, but catalytic efficiency is 20-fold higher with NADH. The polypeptide is 4-hydroxyprotoasukamycin monooxygenase (Streptomyces nodosus subsp. asukaensis).